We begin with the raw amino-acid sequence, 3424 residues long: Genome polyprotein (3424 aa).

Residues 2–15 (SKKPGKSAAKRTVN) are interaction with host EXOC1. At 2 to 101 (SKKPGKSAAK…SVNKRKEKKK (100 aa)) the chain is on the cytoplasmic side. The tract at residues 35 to 70 (MLDVRGAPRLILALMAFFRFAAIKPTLGLKKRWRSV) is hydrophobic; homodimerization of capsid protein C. The propeptide at 102-118 (SFSTALLWITMITAVAG) is ER anchor for the capsid protein C, removed in mature form by serine protease NS3. The helical transmembrane segment at 102–122 (SFSTALLWITMITAVAGLKIS) threads the bilayer. The Extracellular portion of the chain corresponds to 123–244 (SHRDRPLLMV…TTKYLTKVEN (122 aa)). N133 carries N-linked (GlcNAc...) asparagine; by host glycosylation. Residues 245-265 (WVIRNPGYALVALATAWMLGS) traverse the membrane as a helical segment. At 266-270 (NTPQR) the chain is on the cytoplasmic side. Residues 271–285 (VVFMIMMMLIAPAYS) form a helical membrane-spanning segment. Residues 286 to 738 (LNCLGISNRD…GVFGTAFRSL (453 aa)) lie on the Extracellular side of the membrane. 8 disulfides stabilise this stretch: C288/C315, C345/C401, C345/C406, C359/C390, C377/C401, C377/C406, C475/C573, and C590/C621. A fusion peptide region spans residues 383–396 (DRGWGNGCGLFGKG). Residues 739–759 (FGGMSWVTQALMGALLLWLGI) traverse the membrane as a helical segment. The Cytoplasmic portion of the chain corresponds to 760 to 765 (SARERT). The chain crosses the membrane as a helical span at residues 766–786 (VSLIMLSVGGILLFLAVNVHA). Residues 787–1170 (DTGCAIDMAR…EVLRRRWTAN (384 aa)) are Extracellular-facing. Intrachain disulfides connect C790–C801, C841–C929, C965–C1009, C1067–C1116, C1078–C1099, C1078–C1100, C1099–C1103, and C1100–C1103. N916 and N993 each carry an N-linked (GlcNAc...) asparagine; by host glycan. Residues 1171–1191 (LALPTSALLMACFIFGGFTYL) form a helical membrane-spanning segment. Over 1192-1213 (DLFRYFILVGAAFAEANSGGDV) the chain is Cytoplasmic. Residues 1214–1234 (VHLAMIAAFNIQPVALVTTFF) traverse the membrane as a helical segment. Residues 1235 to 1276 (RKNWTNRENMILIIAAACTQMACMELKIELFHVMNSLSLAWM) lie on the Lumenal side of the membrane. A helical transmembrane segment spans residues 1277–1297 (ILKALTTGTTSTLAMPFLAAL). Topologically, residues 1298–1302 (SPPMN) are cytoplasmic. A helical transmembrane segment spans residues 1303-1323 (WLGLDVVRCLLIMAGVAALIS). Residues 1324-1333 (ERRESLAKKK) lie on the Lumenal side of the membrane. A helical transmembrane segment spans residues 1334–1354 (GALLISAALALTGAFSPLVLQ). Residues 1355 to 1367 (GALMFTQSLGKRG) are Cytoplasmic-facing. A helical membrane pass occupies residues 1368 to 1388 (WPASEVLTAVGMTFALAGSVA). Residues 1389–1391 (RLD) lie on the Lumenal side of the membrane. A helical transmembrane segment spans residues 1392 to 1412 (GGTMAIPLATMAILAVAYVLS). Over 1413-1469 (GKSTDMWLERCADISWINEAEITGTSPRLDVELDSNGDFKMINDPGVPMWMWTCRMG) the chain is Cytoplasmic. Residues 1420-1459 (LERCADISWINEAEITGTSPRLDVELDSNGDFKMINDPGV) form an interacts with and activates NS3 protease region. Residues 1470–1490 (LMAMAAYNPVLIPVSMAGYWM) constitute an intramembrane region (helical). Topologically, residues 1491 to 2167 (TVKIHKRGGV…ALEELPDTVE (677 aa)) are cytoplasmic. In terms of domain architecture, Peptidase S7 spans 1498 to 1675 (GGVMWDVPAP…ERQEEETPEA (178 aa)). Active-site charge relay system; for serine protease NS3 activity residues include H1548, D1572, and S1632. The 157-residue stretch at 1678–1834 (PDMLKKRRLT…DSNAPIIDQE (157 aa)) folds into the Helicase ATP-binding domain. The tract at residues 1682 to 1685 (KKRR) is important for RNA-binding. Position 1691–1698 (1691–1698 (LHPGAGKT)) interacts with ATP. Positions 1782–1785 (DEAH) match the DEAH box motif. The Helicase C-terminal domain maps to 1845-2009 (GFEWITEYTG…GLVAQLYGPE (165 aa)). K1886 carries the N6-acetyllysine; by host modification. The tract at residues 1944–1969 (APITPASAAQRRGRIGRDPTQSGDEY) is disordered. The interval 2160–2164 (EELPD) is regulates the ATPase activity of NS3 helicase. A helical membrane pass occupies residues 2168–2188 (TILLMTMMCVASLGMFTLMVH). Over 2189–2190 (RR) the chain is Lumenal. The helical intramembrane region spans 2191–2211 (GLGKTGLGTLVLATVTVLLWI). At 2212–2213 (SD) the chain is on the lumenal side. A helical transmembrane segment spans residues 2214–2234 (VPAPKIAGVLLIAFLLMIVLI). The Cytoplasmic portion of the chain corresponds to 2235–2249 (PEPEKQRSQTDNHLA). A helical membrane pass occupies residues 2250-2264 (IFLVCVLLLIGAVSA). At 2265–2299 (NEMGWLETTKKDIGKLFRSSGDTQEQSTWQSWAPE) the chain is on the lumenal side. The segment at residues 2300–2320 (VRAATAWAGYAGLTVFLTPLF) is an intramembrane region (helical). Residues 2321–2342 (RHLITTQYVSFSLTAITAQASA) lie on the Lumenal side of the membrane. Residues 2343–2363 (LFGLSAGYPFVGIDLAVGFLL) form a helical membrane-spanning segment. Residues 2364–2371 (LGCYGQYN) lie on the Cytoplasmic side of the membrane. The chain crosses the membrane as a helical span at residues 2372-2392 (LPTAVATGLLLLAHYGYMIPG). The Lumenal portion of the chain corresponds to 2393–2439 (WQAEAMRAAQKRTAAGVMKNAVVDGIVATDIPEVDTATPITEKKLGQ). The chain crosses the membrane as a helical span at residues 2440 to 2460 (ILLILLCGASLLVKFDTMVLV). The Cytoplasmic segment spans residues 2461 to 3424 (EAGVLTTSAM…PSPVLFTGAI (964 aa)). Residues 2520–2784 (GGGSAPTLGE…DVCLGSGTRA (265 aa)) enclose the mRNA cap 0-1 NS5-type MT domain. Residue S2575 participates in S-adenosyl-L-methionine binding. A Phosphoserine modification is found at S2575. Catalysis depends on K2580, which acts as the For 2'-O-MTase activity. 6 residues coordinate S-adenosyl-L-methionine: G2605, W2606, T2623, K2624, D2650, and V2651. D2665 serves as the catalytic For 2'-O-MTase activity. I2666 contributes to the S-adenosyl-L-methionine binding site. Active-site for 2'-O-MTase activity residues include K2700 and E2736. Y2738 contacts S-adenosyl-L-methionine. 4 residues coordinate Zn(2+): E2958, H2962, C2967, and C2970. In terms of domain architecture, RdRp catalytic spans 3048 to 3200 (GNMFADDTAG…KPIDDRFASA (153 aa)). The Zn(2+) site is built by H3235, C3251, and C3370.

It in the N-terminal section; belongs to the class I-like SAM-binding methyltransferase superfamily. mRNA cap 0-1 NS5-type methyltransferase family. As to quaternary structure, homodimer. Interacts (via N-terminus) with host EXOC1 (via C-terminus); this interaction results in EXOC1 degradation through the proteasome degradation pathway. In terms of assembly, forms heterodimers with envelope protein E in the endoplasmic reticulum and Golgi. Homodimer; in the endoplasmic reticulum and Golgi. Interacts with protein prM. Interacts with non-structural protein 1. As to quaternary structure, homodimer; Homohexamer when secreted. Interacts with envelope protein E. NS1 interacts with NS4B. Interacts with host complement protein CFH; this interaction leads to the degradation of C3. In terms of assembly, interacts (via N-terminus) with serine protease NS3. Forms a heterodimer with serine protease NS3. May form homooligomers. As to quaternary structure, forms a heterodimer with NS2B. Interacts with non-structural protein 2A (via N-terminus). Interacts with NS4B. Interacts with unphosphorylated RNA-directed RNA polymerase NS5; this interaction stimulates RNA-directed RNA polymerase NS5 guanylyltransferase activity. In terms of assembly, interacts with serine protease NS3. Homodimer. Interacts with host STAT2; this interaction inhibits the phosphorylation of the latter, and, when all viral proteins are present (polyprotein), targets STAT2 for degradation. Interacts with serine protease NS3. In terms of processing, specific enzymatic cleavages in vivo yield mature proteins. Cleavages in the lumen of endoplasmic reticulum are performed by host signal peptidase, whereas cleavages in the cytoplasmic side are performed by serine protease NS3. Signal cleavage at the 2K-4B site requires a prior NS3 protease-mediated cleavage at the 4A-2K site. Post-translationally, cleaved in post-Golgi vesicles by a host furin, releasing the mature small envelope protein M, and peptide pr. This cleavage is incomplete as up to 30% of viral particles still carry uncleaved prM. N-glycosylated. In terms of processing, N-glycosylated. The excreted form is glycosylated and this is required for efficient secretion of the protein from infected cells. Post-translationally, acetylated by host KAT5. Acetylation modulates NS3 RNA-binding and unwinding activities and plays an important positive role for viral replication. Phosphorylated on serines residues. This phosphorylation may trigger NS5 nuclear localization.

It localises to the virion. Its subcellular location is the host nucleus. The protein resides in the host cytoplasm. The protein localises to the host perinuclear region. It is found in the secreted. It localises to the virion membrane. Its subcellular location is the host endoplasmic reticulum membrane. The catalysed reaction is Selective hydrolysis of -Xaa-Xaa-|-Yaa- bonds in which each of the Xaa can be either Arg or Lys and Yaa can be either Ser or Ala.. The enzyme catalyses RNA(n) + a ribonucleoside 5'-triphosphate = RNA(n+1) + diphosphate. It catalyses the reaction a ribonucleoside 5'-triphosphate + H2O = a ribonucleoside 5'-diphosphate + phosphate + H(+). It carries out the reaction ATP + H2O = ADP + phosphate + H(+). The catalysed reaction is a 5'-end (5'-triphosphoguanosine)-ribonucleoside in mRNA + S-adenosyl-L-methionine = a 5'-end (N(7)-methyl 5'-triphosphoguanosine)-ribonucleoside in mRNA + S-adenosyl-L-homocysteine. The enzyme catalyses a 5'-end (N(7)-methyl 5'-triphosphoguanosine)-ribonucleoside in mRNA + S-adenosyl-L-methionine = a 5'-end (N(7)-methyl 5'-triphosphoguanosine)-(2'-O-methyl-ribonucleoside) in mRNA + S-adenosyl-L-homocysteine + H(+). Plays a role in virus budding by binding to the cell membrane and gathering the viral RNA into a nucleocapsid that forms the core of a mature virus particle. During virus entry, may induce genome penetration into the host cytoplasm after hemifusion induced by the surface proteins. Can migrate to the cell nucleus where it modulates host functions. Overcomes the anti-viral effects of host EXOC1 by sequestering and degrading the latter through the proteasome degradation pathway. Functionally, inhibits RNA silencing by interfering with host Dicer. In terms of biological role, prevents premature fusion activity of envelope proteins in trans-Golgi by binding to envelope protein E at pH6.0. After virion release in extracellular space, gets dissociated from E dimers. Its function is as follows. Acts as a chaperone for envelope protein E during intracellular virion assembly by masking and inactivating envelope protein E fusion peptide. prM is the only viral peptide matured by host furin in the trans-Golgi network probably to avoid catastrophic activation of the viral fusion activity in acidic Golgi compartment prior to virion release. prM-E cleavage is inefficient, and many virions are only partially matured. These uncleaved prM would play a role in immune evasion. May play a role in virus budding. Exerts cytotoxic effects by activating a mitochondrial apoptotic pathway through M ectodomain. May display a viroporin activity. Functionally, binds to host cell surface receptor and mediates fusion between viral and cellular membranes. Envelope protein is synthesized in the endoplasmic reticulum in the form of heterodimer with protein prM. They play a role in virion budding in the ER, and the newly formed immature particle is covered with 60 spikes composed of heterodimer between precursor prM and envelope protein E. The virion is transported to the Golgi apparatus where the low pH causes dissociation of PrM-E heterodimers and formation of E homodimers. prM-E cleavage is inefficient, and many virions are only partially matured. These uncleaved prM would play a role in immune evasion. In terms of biological role, involved in immune evasion, pathogenesis and viral replication. Once cleaved off the polyprotein, is targeted to three destinations: the viral replication cycle, the plasma membrane and the extracellular compartment. Essential for viral replication. Required for formation of the replication complex and recruitment of other non-structural proteins to the ER-derived membrane structures. Excreted as a hexameric lipoparticle that plays a role against host immune response. Antagonizing the complement function. Binds to the host macrophages and dendritic cells. Inhibits signal transduction originating from Toll-like receptor 3 (TLR3). Its function is as follows. Component of the viral RNA replication complex that functions in virion assembly and antagonizes the host alpha/beta interferon antiviral response. Required cofactor for the serine protease function of NS3. May have membrane-destabilizing activity and form viroporins. Functionally, displays three enzymatic activities: serine protease, NTPase and RNA helicase. NS3 serine protease, in association with NS2B, performs its autocleavage and cleaves the polyprotein at dibasic sites in the cytoplasm: C-prM, NS2A-NS2B, NS2B-NS3, NS3-NS4A, NS4A-2K and NS4B-NS5. NS3 RNA helicase binds RNA and unwinds dsRNA in the 3' to 5' direction. In terms of biological role, regulates the ATPase activity of the NS3 helicase activity. NS4A allows NS3 helicase to conserve energy during unwinding. Its function is as follows. Functions as a signal peptide for NS4B and is required for the interferon antagonism activity of the latter. Induces the formation of ER-derived membrane vesicles where the viral replication takes place. Inhibits interferon (IFN)-induced host STAT1 phosphorylation and nuclear translocation, thereby preventing the establishment of cellular antiviral state by blocking the IFN-alpha/beta pathway. Inhibits STAT2 translocation in the nucleus after IFN-alpha treatment. Functionally, replicates the viral (+) and (-) RNA genome, and performs the capping of genomes in the cytoplasm. NS5 methylates viral RNA cap at guanine N-7 and ribose 2'-O positions. Besides its role in RNA genome replication, also prevents the establishment of cellular antiviral state by blocking the interferon-alpha/beta (IFN-alpha/beta) signaling pathway. Inhibits host TYK2 and STAT2 phosphorylation, thereby preventing activation of JAK-STAT signaling pathway. This Aedes sp. (Human) protein is Genome polyprotein.